The chain runs to 238 residues: Transcription factor MYB27 (238 aa).

HTH myb-type domains lie at 6-58 (EETL…MNYL) and 59-113 (NPTL…RKKQ). The Nuclear localization signal signature appears at 31–38 (ERRWDSLA). 2 consecutive DNA-binding regions (H-T-H motif) follow at residues 34–58 (WDSL…MNYL) and 86–109 (WSKI…RTHY).

It localises to the nucleus. This chain is Transcription factor MYB27, found in Arabidopsis thaliana (Mouse-ear cress).